The chain runs to 376 residues: TelA-like protein SERP0976 (376 aa).

Belongs to the TelA family.

This chain is TelA-like protein SERP0976, found in Staphylococcus epidermidis (strain ATCC 35984 / DSM 28319 / BCRC 17069 / CCUG 31568 / BM 3577 / RP62A).